A 272-amino-acid chain; its full sequence is tRNA (guanine-N(7)-)-methyltransferase (272 aa).

The segment covering 1-20 has biased composition (basic and acidic residues); sequence MSTDSESKRRAYREEKEGAR. The disordered stretch occupies residues 1–43; it reads MSTDSESKRRAYREEKEGARKKSVKLAPEATPESKPDLPRKRY. S-adenosyl-L-methionine contacts are provided by residues glycine 89, 112–113, 148–149, and cysteine 168; these read EI and NA. Aspartate 171 is an active-site residue. 246–248 is a binding site for S-adenosyl-L-methionine; that stretch reads TEE.

The protein belongs to the class I-like SAM-binding methyltransferase superfamily. TrmB family. Forms a complex with TRM82.

It is found in the nucleus. It carries out the reaction guanosine(46) in tRNA + S-adenosyl-L-methionine = N(7)-methylguanosine(46) in tRNA + S-adenosyl-L-homocysteine. The protein operates within tRNA modification; N(7)-methylguanine-tRNA biosynthesis. In terms of biological role, catalyzes the formation of N(7)-methylguanine at position 46 (m7G46) in tRNA. The protein is tRNA (guanine-N(7)-)-methyltransferase of Meyerozyma guilliermondii (strain ATCC 6260 / CBS 566 / DSM 6381 / JCM 1539 / NBRC 10279 / NRRL Y-324) (Yeast).